We begin with the raw amino-acid sequence, 419 residues long: KLAEILMMPGKTVSVEQGMEIPVTHDIGTIRLDGDQGNSGVGIPSSRLVGCMTHERAFGADTMELGHIDYSFKPVKPVVSNECQAMEVCQQNMVIPLFYGAMPNMGLYYTPDGPFENPGDLMKAFKIQEAWESMEHAAEHLTRDTVWVMQKLFASGADGVNFDTTGAAGDGDMYGTLHAIEALRKEFPDMYIEAGMAGECVLGMHGNLQYDGVTLAGLWPHQQAPLVAKAGANVFGPVCNTNTSKTSAWNLARAVTFIKAAVGASPIPCHVNMGMGVGGIPMLETPPIDAVTRASKAMVEIAGVDGIOIGVGDPMGMPISHIMASGMTGMRAAGDLVARMEFSKNMRIGEAKEYVAKKLGVDKMDLVDEHVMRELREELDIGIITSVPGAAKGIAAKMNIEKLLGIKINSCNLFRKQIA.

Position 308 (pyrrolysine 308) is a non-standard amino acid, pyrrolysine.

Belongs to the dimethylamine methyltransferase family.

The catalysed reaction is Co(I)-[dimethylamine-specific corrinoid protein] + dimethylamine + H(+) = methyl-Co(III)-[dimethylamine-specific corrinoid protein] + methylamine. It participates in one-carbon metabolism; methanogenesis from dimethylamine. Catalyzes the transfer of a methyl group from dimethylamine to the corrinoid cofactor of MtbC. No evidence for expression of this protein has been found after growth under presumably inducing conditions. The sequence is that of Dimethylamine methyltransferase MtbB2 from Methanosarcina barkeri.